The primary structure comprises 134 residues: ATP synthase epsilon chain (134 aa).

This sequence belongs to the ATPase epsilon chain family. As to quaternary structure, F-type ATPases have 2 components, CF(1) - the catalytic core - and CF(0) - the membrane proton channel. CF(1) has five subunits: alpha(3), beta(3), gamma(1), delta(1), epsilon(1). CF(0) has three main subunits: a, b and c.

It is found in the cell inner membrane. Produces ATP from ADP in the presence of a proton gradient across the membrane. The chain is ATP synthase epsilon chain from Nitratidesulfovibrio vulgaris (strain DSM 19637 / Miyazaki F) (Desulfovibrio vulgaris).